Reading from the N-terminus, the 318-residue chain is Probable aminopeptidase YbaC (318 aa).

Catalysis depends on Ser115, which acts as the Nucleophile. Asp266 is a catalytic residue. His296 acts as the Proton donor in catalysis.

Belongs to the peptidase S33 family.

Probable aminopeptidase. The chain is Probable aminopeptidase YbaC (ybaC) from Bacillus subtilis (strain 168).